Here is a 149-residue protein sequence, read N- to C-terminus: Protein FAM72B (149 aa).

Belongs to the FAM72 family.

This is Protein FAM72B (FAM72B) from Homo sapiens (Human).